The following is a 451-amino-acid chain: MAANVSPSAETLSSGAAAHPSNTAEEIANQYNLLPKLIPYLDRHLVFPLLEFSSGQDDEKEIVRAKYELLKHTNMTDYVANLWKEINNSDDIPDEFVKKREEVLAKLQQYEEESAKITQLLQDESVVANLRSDKVANLKFLEEQHGVTVEMVNSLYDYGRFQYSCGSYGNAAELLYQFRVLSTDNDKVASATWGKFASEILTTSWEAAMEEVQKVKDSIETRLFNNPLGQLQNRSWLIHWSLFPFFNHDPARDVLTDLFFSPAYINTIQTNCPWILRYLAAAVITNRNRAHKNSSVYQKQLKDLIRVVRQEGYEYNDPITDFIKALYVDFDFEEAQKKLGEAEEVLRSDFFLVSTTDAFVEAARHLISESYCKIHQRIDIKDLSTRLGLNQDEGEKWIVNLIRDTRVDAKIDYKEGTVIMNHPPQSVYQQVIEKTKGAFFRTQVLSAAVAK.

The PCI domain occupies 256–425 (TDLFFSPAYI…GTVIMNHPPQ (170 aa)).

The protein belongs to the eIF-3 subunit E family. Component of the eukaryotic translation initiation factor 3 (eIF-3) complex.

It is found in the cytoplasm. Functionally, component of the eukaryotic translation initiation factor 3 (eIF-3) complex, which is involved in protein synthesis of a specialized repertoire of mRNAs and, together with other initiation factors, stimulates binding of mRNA and methionyl-tRNAi to the 40S ribosome. The eIF-3 complex specifically targets and initiates translation of a subset of mRNAs involved in cell proliferation. The protein is Eukaryotic translation initiation factor 3 subunit E (int6) of Aspergillus fumigatus (strain CBS 144.89 / FGSC A1163 / CEA10) (Neosartorya fumigata).